A 31-amino-acid polypeptide reads, in one-letter code: MLVFQMRYQMRYVDKTSTVLKQTKKSDYADK.

In terms of biological role, this peptide is involved in the control mechanism of the synthesis of the erythromycin resistance protein. The protein is 23S rRNA methylase leader peptide (ermC) of Escherichia coli.